Reading from the N-terminus, the 265-residue chain is HUWE1-associated protein modifying stress responses (265 aa).

Disordered stretches follow at residues 1-22 (MEDK…HWFS), 145-170 (RNSR…GSSV), 195-218 (VRSS…RRNG), and 240-265 (GTRK…NRMI). Polar residues-rich tracts occupy residues 156–170 (VSPN…GSSV) and 195–212 (VRSS…SSNT).

The protein belongs to the HAPSTR1 family. In terms of assembly, oligomer.

It is found in the nucleus. The protein resides in the cytoplasm. Acts as a central player within a network of stress response pathways promoting cellular adaptability. Functions as a negative regulator of TP53/P53 in the cellular response to telomere erosion and probably also DNA damage. The protein is HUWE1-associated protein modifying stress responses of Xenopus tropicalis (Western clawed frog).